Reading from the N-terminus, the 164-residue chain is Thiol peroxidase (164 aa).

The region spanning 16-162 (LQVGDIAKDF…YEAAINAAKI (147 aa)) is the Thioredoxin domain. The active-site Cysteine sulfenic acid (-SOH) intermediate is the Cys58. Cys58 and Cys92 form a disulfide bridge.

Belongs to the peroxiredoxin family. Tpx subfamily. Homodimer.

It carries out the reaction a hydroperoxide + [thioredoxin]-dithiol = an alcohol + [thioredoxin]-disulfide + H2O. Its function is as follows. Thiol-specific peroxidase that catalyzes the reduction of hydrogen peroxide and organic hydroperoxides to water and alcohols, respectively. Plays a role in cell protection against oxidative stress by detoxifying peroxides. The protein is Thiol peroxidase of Streptococcus agalactiae serotype V (strain ATCC BAA-611 / 2603 V/R).